A 269-amino-acid polypeptide reads, in one-letter code: Ribosomal RNA small subunit methyltransferase J (269 aa).

S-adenosyl-L-methionine is bound by residues Glu125–Arg126 and Asp179.

It belongs to the methyltransferase superfamily. RsmJ family.

Its subcellular location is the cytoplasm. The enzyme catalyses guanosine(1516) in 16S rRNA + S-adenosyl-L-methionine = N(2)-methylguanosine(1516) in 16S rRNA + S-adenosyl-L-homocysteine + H(+). Functionally, specifically methylates the guanosine in position 1516 of 16S rRNA. In Pseudomonas syringae pv. tomato (strain ATCC BAA-871 / DC3000), this protein is Ribosomal RNA small subunit methyltransferase J.